Here is a 435-residue protein sequence, read N- to C-terminus: ATP-dependent protease ATPase subunit HslU (435 aa).

Residues Ile-18, 60 to 65 (GVGKTE), Asp-248, Glu-313, and Arg-385 contribute to the ATP site.

It belongs to the ClpX chaperone family. HslU subfamily. In terms of assembly, a double ring-shaped homohexamer of HslV is capped on each side by a ring-shaped HslU homohexamer. The assembly of the HslU/HslV complex is dependent on binding of ATP.

Its subcellular location is the cytoplasm. Its function is as follows. ATPase subunit of a proteasome-like degradation complex; this subunit has chaperone activity. The binding of ATP and its subsequent hydrolysis by HslU are essential for unfolding of protein substrates subsequently hydrolyzed by HslV. HslU recognizes the N-terminal part of its protein substrates and unfolds these before they are guided to HslV for hydrolysis. This is ATP-dependent protease ATPase subunit HslU from Rhizobium etli (strain ATCC 51251 / DSM 11541 / JCM 21823 / NBRC 15573 / CFN 42).